Here is a 494-residue protein sequence, read N- to C-terminus: Catalase (494 aa).

Catalysis depends on residues H65 and N138. A heme-binding site is contributed by Y348.

Belongs to the catalase family. In terms of assembly, homotetramer. Heme serves as cofactor.

The protein resides in the cytoplasm. It localises to the cytosol. It is found in the peroxisome matrix. The catalysed reaction is 2 H2O2 = O2 + 2 H2O. Functionally, catalyzes the degradation of hydrogen peroxide (H(2)O(2)) generated by peroxisomal oxidases to water and oxygen, thereby protecting cells from the toxic effects of hydrogen peroxide. The sequence is that of Catalase from Pisum sativum (Garden pea).